The following is a 383-amino-acid chain: WD repeat-containing protein 55 (383 aa).

Positions 1 to 11 are enriched in basic and acidic residues; the sequence is MDRTCEERPAE. Residues 1–33 are disordered; that stretch reads MDRTCEERPAEDGSDEEDPDSMEAPTRIRDTPE. Residues 12 to 21 show a composition bias toward acidic residues; that stretch reads DGSDEEDPDS. Position 14 is a phosphoserine (S14). WD repeat units lie at residues 36–75, 82–121, 125–163, 166–205, 208–247, 250–289, and 293–332; these read VLEA…GETK, HHLK…LERR, AHGA…PLMD, QHEE…FELL, PQSG…ATSD, ALRA…VVGS, and HTGE…AVVV. S354 is modified (phosphoserine). Positions 363 to 383 are disordered; the sequence is REEGEDSMAQEEKEETGDDSD. Positions 365–383 are enriched in acidic residues; sequence EGEDSMAQEEKEETGDDSD. T378 carries the post-translational modification Phosphothreonine. A Phosphoserine modification is found at S382.

The protein belongs to the WD repeat WDR55 family.

Its subcellular location is the nucleus. The protein resides in the nucleolus. The protein localises to the cytoplasm. In terms of biological role, nucleolar protein that acts as a modulator of rRNA synthesis. Plays a central role during organogenesis. The protein is WD repeat-containing protein 55 (WDR55) of Homo sapiens (Human).